We begin with the raw amino-acid sequence, 45 residues long: uncharacterized protein (45 aa).

This is an uncharacterized protein from Bacillus subtilis (strain 168).